Reading from the N-terminus, the 135-residue chain is Peptide methionine sulfoxide reductase MsrB (135 aa).

The MsrB domain occupies 9 to 131 (DDYWRSKLTD…NSASIQFEEE (123 aa)). Zn(2+)-binding residues include Cys-48, Cys-51, Cys-97, and Cys-100. The active-site Nucleophile is Cys-120.

Belongs to the MsrB Met sulfoxide reductase family. Zn(2+) serves as cofactor.

It carries out the reaction L-methionyl-[protein] + [thioredoxin]-disulfide + H2O = L-methionyl-(R)-S-oxide-[protein] + [thioredoxin]-dithiol. The chain is Peptide methionine sulfoxide reductase MsrB from Teredinibacter turnerae (strain ATCC 39867 / T7901).